Reading from the N-terminus, the 315-residue chain is Malate dehydrogenase (315 aa).

NAD(+)-binding positions include 10–15 (GAGNVG) and aspartate 34. Substrate contacts are provided by arginine 85 and arginine 91. NAD(+) contacts are provided by residues asparagine 98 and 121–123 (VSN). Substrate-binding residues include asparagine 123 and arginine 154. Histidine 178 (proton acceptor) is an active-site residue.

It belongs to the LDH/MDH superfamily. MDH type 3 family.

The catalysed reaction is (S)-malate + NAD(+) = oxaloacetate + NADH + H(+). Catalyzes the reversible oxidation of malate to oxaloacetate. The sequence is that of Malate dehydrogenase from Rhodopirellula baltica (strain DSM 10527 / NCIMB 13988 / SH1).